Reading from the N-terminus, the 218-residue chain is Adenylate kinase (218 aa).

Residue 10–15 (GAGKGT) participates in ATP binding. The tract at residues 30-59 (STGDMLRAAVKAGTPLGLEAKAIMDAGGLV) is NMP. AMP-binding positions include Thr31, Arg36, 57–59 (GLV), 85–88 (GFPR), and Gln92. Residues 122-159 (GRRVHLASGRTYHVTFNPPKAAGKDDVTGEDLVQRDDD) are LID. Residues Arg123 and 132–133 (TY) each bind ATP. Residues Arg156 and Arg167 each coordinate AMP. An ATP-binding site is contributed by Arg203.

The protein belongs to the adenylate kinase family. In terms of assembly, monomer.

The protein localises to the cytoplasm. The catalysed reaction is AMP + ATP = 2 ADP. Its pathway is purine metabolism; AMP biosynthesis via salvage pathway; AMP from ADP: step 1/1. Catalyzes the reversible transfer of the terminal phosphate group between ATP and AMP. Plays an important role in cellular energy homeostasis and in adenine nucleotide metabolism. This chain is Adenylate kinase, found in Chromobacterium violaceum (strain ATCC 12472 / DSM 30191 / JCM 1249 / CCUG 213 / NBRC 12614 / NCIMB 9131 / NCTC 9757 / MK).